The primary structure comprises 536 residues: Chaperonin GroEL 1 (536 aa).

ATP-binding positions include 29 to 32, 86 to 90, G413, 476 to 478, and D492; these read TLGP, DGTTT, and NAA.

The protein belongs to the chaperonin (HSP60) family. As to quaternary structure, forms a cylinder of 14 subunits composed of two heptameric rings stacked back-to-back. Interacts with the co-chaperonin GroES.

It localises to the cytoplasm. It carries out the reaction ATP + H2O + a folded polypeptide = ADP + phosphate + an unfolded polypeptide.. In terms of biological role, together with its co-chaperonin GroES, plays an essential role in assisting protein folding. The GroEL-GroES system forms a nano-cage that allows encapsulation of the non-native substrate proteins and provides a physical environment optimized to promote and accelerate protein folding. The polypeptide is Chaperonin GroEL 1 (Nocardia farcinica (strain IFM 10152)).